Reading from the N-terminus, the 201-residue chain is Glycerol-3-phosphate acyltransferase (201 aa).

Helical transmembrane passes span M10–L30, L60–A80, A86–F106, L116–V136, and A166–I186.

This sequence belongs to the PlsY family. In terms of assembly, probably interacts with PlsX.

Its subcellular location is the cell inner membrane. The enzyme catalyses an acyl phosphate + sn-glycerol 3-phosphate = a 1-acyl-sn-glycero-3-phosphate + phosphate. The protein operates within lipid metabolism; phospholipid metabolism. Functionally, catalyzes the transfer of an acyl group from acyl-phosphate (acyl-PO(4)) to glycerol-3-phosphate (G3P) to form lysophosphatidic acid (LPA). This enzyme utilizes acyl-phosphate as fatty acyl donor, but not acyl-CoA or acyl-ACP. This Brucella abortus (strain 2308) protein is Glycerol-3-phosphate acyltransferase.